Here is a 558-residue protein sequence, read N- to C-terminus: MALKGQEDYIFHFKDSSHPVDFLDAFRTFYMDGLFTDITLQCPSGIIFHCHRAVLAACSNYFKAMFTADMKEKFKSKIKLSGIHHDILEGLVNYAYTSQIEITKRNVQSLLEAADLLQFLSVKKACEQFLVRHLDIDNCIGMHSFAEFHVCSELEKESRRILCSRFKEVWQQEEFLEISLEKFLFILSRKNLSVWKEEAILEPVIKWTAHDVENRIECIYNLLSYINIDIDPVYLKTALGLQRSCLLTENKIRSLIYNALNPMHKEISQRSTATMYIIGGYYWHPLSEVHIWDPLTNVWIQGAEIPDYTRESYGVTCLGPNIYVTGGYRTDNIDALDTVWIYNSEGDEWTEGLPMLNARYYHCAVTLGGCVYALGGYRKGAPAEEAEFYDPLKEKWLPIANMIKGVGNATACVLHEVIYVIGGHCGYRGSCTYDKVQSYNSDINEWSLITASPHPEYGLCSVPFENKLYLVGGQTTITECYDPEQNEWRETAPMMERRMECGAVIMNGCIYVTGGYSYSKGTYLQSIEKYDPDLNKWEIVGNLPSAMRSHGCVCVYNV.

Residues 36–104 (TDITLQCPSG…AYTSQIEITK (69 aa)) enclose the BTB domain. The BACK domain maps to 139–240 (CIGMHSFAEF…DPVYLKTALG (102 aa)). Kelch repeat units follow at residues 274–320 (TMYI…CLGP), 321–369 (NIYV…TLGG), 370–416 (CVYA…VLHE), 418–466 (IYVI…PFEN), 467–508 (KLYL…IMNG), and 510–557 (IYVT…CVYN).

The polypeptide is Kelch-like protein 23 (Klhl23) (Mus musculus (Mouse)).